A 486-amino-acid chain; its full sequence is Patatin-like phospholipase domain-containing protein 2 (486 aa).

Residues 1-8 lie on the Cytoplasmic side of the membrane; the sequence is MFPRETKW. The helical transmembrane segment at 9-29 threads the bilayer; that stretch reads NISFAGCGFLGVYHIGVASCL. A PNPLA domain is found at 10–179; sequence ISFAGCGFLG…SDNLPLYELK (170 aa). The GXGXXG signature appears at 14 to 19; it reads GCGFLG. The Extracellular portion of the chain corresponds to 30 to 42; it reads REHAPFLVANATH. N39 is a glycosylation site (N-linked (GlcNAc...) asparagine). Residues 43–63 form a helical membrane-spanning segment; that stretch reads IYGASAGALTATALVTGACLG. Residues 45-49 carry the GXSXG motif; it reads GASAG. The active-site Nucleophile is the S47. Over 64-137 the chain is Cytoplasmic; the sequence is EAGANIIEVS…IISHFSSKDE (74 aa). K92 participates in a covalent cross-link: Glycyl lysine isopeptide (Lys-Gly) (interchain with G-Cter in ubiquitin). A helical transmembrane segment spans residues 138–158; it reads LIQANVCSTFIPVYCGLIPPT. Residues 159 to 331 lie on the Extracellular side of the membrane; sequence LQGVRYVDGG…TTLSNMLPVR (173 aa). Residue D166 is the Proton acceptor of the active site. A DGA/G motif is present at residues 166–168; sequence DGG. A helical transmembrane segment spans residues 332 to 352; the sequence is LATAMMVPYTLPLESAVSFTI. The Cytoplasmic portion of the chain corresponds to 353-486; that stretch reads RLLEWLPDVP…PQDPPGLPPC (134 aa). Position 374 is a phosphoserine; in vitro (S374). Residues S396 and S406 each carry the phosphoserine; by PKA modification. A phosphoserine; in vitro mark is found at S430 and S468. Over residues 465 to 476 the composition is skewed to low complexity; that stretch reads APASPTAADPAT. The segment at 465–486 is disordered; it reads APASPTAADPATPQDPPGLPPC. Residues 477 to 486 show a composition bias toward pro residues; that stretch reads PQDPPGLPPC.

As to quaternary structure, interacts with ABHD5; this association stimulates PNPLA2 triglyceride hydrolase activity. Interacts with SERPINF1; this interaction stimulates the phospholipase A2 activity of PNPLA2. Despite a colocalization in lipid droplets, it probably does not interact with PLIN. Interacts with PLIN5; prevents interaction with ABHD5. Interacts with FAF2. Post-translationally, phosphorylation at Ser-406 by PKA is increased during fasting and moderate intensity exercise, and moderately increases lipolytic activity. Ubiquitinated by PEX2 in response to reactive oxygen species (ROS), leading to its degradation. Ubiquitination is stimulated by LDAH. In terms of tissue distribution, expressed at high levels in white and brown adipose tissue, and to a lesser degree in testis and cardiac muscle. Barely detected in liver, spleen, thymus, kidney, skeletal muscle, and brain. Among the white adipose depots, gonadal fat showed the highest level of expression compared with inguinal and renal white adipose tissues.

Its subcellular location is the lipid droplet. It localises to the cell membrane. The protein localises to the cytoplasm. The catalysed reaction is a triacylglycerol + H2O = a diacylglycerol + a fatty acid + H(+). The enzyme catalyses a triacylglycerol + H2O = a 1,2-diacylglycerol + a fatty acid + H(+). It catalyses the reaction a triacylglycerol + H2O = a 1,3-diacylglycerol + a fatty acid + H(+). It carries out the reaction a triacyl-sn-glycerol + H2O = a 2,3-diacyl-sn-glycerol + a fatty acid + H(+). The catalysed reaction is a triacyl-sn-glycerol + H2O = a 1,3-diacyl-sn-glycerol + a fatty acid + H(+). The enzyme catalyses 1,2,3-tri-(9Z-octadecenoyl)-glycerol + H2O = 1,3-di-(9Z-octadecenoyl)-glycerol + (9Z)-octadecenoate + H(+). It catalyses the reaction 1,2,3-tri-(9Z)-hexadecenoylglycerol + H2O = 1,3-di-(9Z)-hexadecenoylglycerol + (9Z)-hexadecenoate + H(+). It carries out the reaction 1,2,3-tri-(9Z,12Z)-octadecadienoylglycerol + H2O = 1,3-di-(9Z,12Z)-octadecadienoylglycerol + (9Z,12Z)-octadecadienoate + H(+). The catalysed reaction is 1,2,3-tri-(9Z,12Z,15Z)-octadecatrienoylglycerol + H2O = 1,3-di-(9Z,12Z,15Z)-octadecatrienoylglycerol + (9Z,12Z,15Z)-octadecatrienoate + H(+). The enzyme catalyses 1,3-di-(9Z)-octadecenoyl-2-hexadecanoylglycerol + H2O = 1,3-di-(9Z-octadecenoyl)-glycerol + hexadecanoate + H(+). It catalyses the reaction 1,2-di-(9Z)-octadecenoyl-3-hexadecanoyl-sn-glycerol + H2O = 1-(9Z)-octadecenoyl-3-hexadecanoyl-sn-glycerol + (9Z)-octadecenoate + H(+). It carries out the reaction 1-hexadecanoyl-2,3-di-(9Z)-octadecenoyl-sn-glycerol + H2O = 1-hexadecanoyl-3-(9Z)-octadecenoyl-sn-glycerol + (9Z)-octadecenoate + H(+). The catalysed reaction is 1,2,3-tri-(9Z-octadecenoyl)-glycerol + H2O = 2,3-di-(9Z)-octadecenoyl-sn-glycerol + (9Z)-octadecenoate + H(+). The enzyme catalyses 1,2,3-tri-(9Z)-hexadecenoylglycerol + H2O = 2,3-di-(9Z)-hexadecenoyl-sn-glycerol + (9Z)-hexadecenoate + H(+). It catalyses the reaction 1,2,3-tri-(9Z,12Z)-octadecadienoylglycerol + H2O = 2,3-di-(9Z,12Z)-octadecadienoyl-sn-glycerol + (9Z,12Z)-octadecadienoate + H(+). It carries out the reaction 1,2,3-tri-(9Z,12Z,15Z)-octadecatrienoylglycerol + H2O = 2,3-di-(9Z,12Z,15Z)-octadecatrienoyl-sn-glycerol + (9Z,12Z,15Z)-octadecatrienoate + H(+). The catalysed reaction is 1,3-di-(9Z)-octadecenoyl-2-hexadecanoylglycerol + H2O = 2-hexadecanoyl-3-(9Z)-octadecenoyl-sn-glycerol + (9Z)-octadecenoate + H(+). The enzyme catalyses 1-hexadecanoyl-2,3-di-(9Z)-octadecenoyl-sn-glycerol + H2O = 2,3-di-(9Z)-octadecenoyl-sn-glycerol + hexadecanoate + H(+). It catalyses the reaction 1,2-di-(9Z)-octadecenoyl-3-hexadecanoyl-sn-glycerol + H2O = 2-(9Z-octadecenoyl)-3-hexadecanoyl-sn-glycerol + (9Z)-octadecenoate + H(+). It carries out the reaction 1,2-di-(9Z-octadecenoyl)-glycerol + (9Z)-octadecenoate + H(+) = 1,2,3-tri-(9Z-octadecenoyl)-glycerol + H2O. The catalysed reaction is a 1-acylglycerol + a 1,3-diacylglycerol = a triacylglycerol + glycerol. The enzyme catalyses a 1-acylglycerol + a 1,2-diacylglycerol = a triacylglycerol + glycerol. It catalyses the reaction 2 a 1-acylglycerol = a 1,2-diacylglycerol + glycerol. It carries out the reaction a triacylglycerol + all-trans-retinol = an all-trans-retinyl ester + a diacylglycerol. The catalysed reaction is 1-(9Z-octadecenoyl)-glycerol + 1,3-di-(9Z-octadecenoyl)-glycerol = 1,2,3-tri-(9Z-octadecenoyl)-glycerol + glycerol. The enzyme catalyses 1-(9Z-octadecenoyl)-glycerol + 1,2-di-(9Z-octadecenoyl)-glycerol = 1,2,3-tri-(9Z-octadecenoyl)-glycerol + glycerol. It catalyses the reaction 2 1-(9Z-octadecenoyl)-glycerol = 1,2-di-(9Z-octadecenoyl)-glycerol + glycerol. It carries out the reaction 1,2,3-tri-(9Z-octadecenoyl)-glycerol + all-trans-retinol = all-trans-retinyl 9Z-octadecenoate + di-(9Z)-octadecenoylglycerol. The catalysed reaction is a 1,2-diacyl-sn-glycero-3-phosphocholine + H2O = a 1-acyl-sn-glycero-3-phosphocholine + a fatty acid + H(+). The enzyme catalyses 1,2,3-tri-(9Z-octadecenoyl)-glycerol + 9-hydroxy-octadecanoate = 9-(9Z-octadecenoyloxy)-octadecanoate + 2,3-di-(9Z)-octadecenoyl-sn-glycerol. It catalyses the reaction 1-hexadecanoyl-2,3-di-(9Z)-octadecenoyl-sn-glycerol + 9-hydroxy-octadecanoate = 9-hexadecanoyloxy-octadecanoate + 2,3-di-(9Z)-octadecenoyl-sn-glycerol. It carries out the reaction 1,2,3-tri-(10Z)-heptadecenoylglycerol + 9-hydroxy-octadecanoate = 2,3-di-(10Z-heptadecenoyl)-sn-glycerol + 9-(10Z-heptadecenoyloxy)-octadecanoate. The catalysed reaction is 1,2,3-tri-(9Z,12Z)-octadecadienoylglycerol + 9-hydroxy-octadecanoate = 2,3-di-(9Z,12Z)-octadecadienoyl-sn-glycerol + 9-(9Z,12Z-octadecadienoyloxy)-octadecanoate. The enzyme catalyses 1,2,3-tri-(9Z)-hexadecenoylglycerol + 9-hydroxy-octadecanoate = 2,3-di-(9Z)-hexadecenoyl-sn-glycerol + 9-(9Z-hexadecenoyloxy)-octadecanoate. It catalyses the reaction 9-hydroxy-octadecanoate + 1,2-di-(9Z-octadecenoyl)-sn-glycerol = 9-(9Z-octadecenoyloxy)-octadecanoate + 2-(9Z-octadecenoyl)-glycerol. It carries out the reaction 1-hexadecanoyl-2,3-di-(9Z)-octadecenoyl-sn-glycerol + 9-hydroxy-octadecanoate = 1-hexadecanoyl-3-(9Z)-octadecenoyl-sn-glycerol + 9-(9Z-octadecenoyloxy)-octadecanoate. Its pathway is glycerolipid metabolism; triacylglycerol degradation. Stimulated by PKA-dependent PLIN phosphorylation. Catalyzes the initial step in triglyceride hydrolysis in adipocyte and non-adipocyte lipid droplets. Exhibits a strong preference for the hydrolysis of long-chain fatty acid esters at the sn-2 position of the glycerol backbone and acts coordinately with LIPE/HLS and DGAT2 within the lipolytic cascade. Also possesses acylglycerol transacylase and phospholipase A2 activities. Transfers fatty acid from triglyceride to retinol, hydrolyzes retinylesters, and generates 1,3-diacylglycerol from triglycerides. Regulates adiposome size and may be involved in the degradation of adiposomes. Catalyzes the formation of an ester bond between hydroxy fatty acids and fatty acids derived from triglycerides or diglycerides to generate fatty acid esters of hydroxy fatty acids (FAHFAs) in adipocytes. Acts antagonistically with LDAH in regulation of cellular lipid stores. Inhibits LDAH-stimulated lipid droplet fusion. May play an important role in energy homeostasis. May play a role in the response of the organism to starvation, enhancing hydrolysis of triglycerides and providing free fatty acids to other tissues to be oxidized in situations of energy depletion. The polypeptide is Patatin-like phospholipase domain-containing protein 2 (Mus musculus (Mouse)).